An 817-amino-acid polypeptide reads, in one-letter code: Leucine--tRNA ligase (817 aa).

Residues 40–50 (PYPSGKLHMGH) carry the 'HIGH' region motif. Positions 578–582 (KMSKS) match the 'KMSKS' region motif. Position 581 (K581) interacts with ATP.

Belongs to the class-I aminoacyl-tRNA synthetase family.

The protein localises to the cytoplasm. It carries out the reaction tRNA(Leu) + L-leucine + ATP = L-leucyl-tRNA(Leu) + AMP + diphosphate. The chain is Leucine--tRNA ligase from Caldicellulosiruptor saccharolyticus (strain ATCC 43494 / DSM 8903 / Tp8T 6331).